A 624-amino-acid chain; its full sequence is 1-deoxy-D-xylulose-5-phosphate synthase (624 aa).

Residues H74 and 115 to 117 (GHS) each bind thiamine diphosphate. Mg(2+) is bound at residue D146. Residues 147-148 (GA), N175, Y286, and E367 each bind thiamine diphosphate. N175 contacts Mg(2+).

It belongs to the transketolase family. DXPS subfamily. As to quaternary structure, homodimer. Mg(2+) is required as a cofactor. It depends on thiamine diphosphate as a cofactor.

The catalysed reaction is D-glyceraldehyde 3-phosphate + pyruvate + H(+) = 1-deoxy-D-xylulose 5-phosphate + CO2. It participates in metabolic intermediate biosynthesis; 1-deoxy-D-xylulose 5-phosphate biosynthesis; 1-deoxy-D-xylulose 5-phosphate from D-glyceraldehyde 3-phosphate and pyruvate: step 1/1. Catalyzes the acyloin condensation reaction between C atoms 2 and 3 of pyruvate and glyceraldehyde 3-phosphate to yield 1-deoxy-D-xylulose-5-phosphate (DXP). The sequence is that of 1-deoxy-D-xylulose-5-phosphate synthase from Alkaliphilus oremlandii (strain OhILAs) (Clostridium oremlandii (strain OhILAs)).